The chain runs to 148 residues: Large ribosomal subunit protein bL9 (148 aa).

This sequence belongs to the bacterial ribosomal protein bL9 family.

In terms of biological role, binds to the 23S rRNA. The polypeptide is Large ribosomal subunit protein bL9 (Staphylococcus epidermidis (strain ATCC 35984 / DSM 28319 / BCRC 17069 / CCUG 31568 / BM 3577 / RP62A)).